The primary structure comprises 461 residues: ATP synthase subunit beta (461 aa).

Residue 151 to 158 (GGAGVGKT) coordinates ATP.

The protein belongs to the ATPase alpha/beta chains family. In terms of assembly, F-type ATPases have 2 components, CF(1) - the catalytic core - and CF(0) - the membrane proton channel. CF(1) has five subunits: alpha(3), beta(3), gamma(1), delta(1), epsilon(1). CF(0) has three main subunits: a(1), b(2) and c(9-12). The alpha and beta chains form an alternating ring which encloses part of the gamma chain. CF(1) is attached to CF(0) by a central stalk formed by the gamma and epsilon chains, while a peripheral stalk is formed by the delta and b chains.

It localises to the cell inner membrane. The catalysed reaction is ATP + H2O + 4 H(+)(in) = ADP + phosphate + 5 H(+)(out). Its function is as follows. Produces ATP from ADP in the presence of a proton gradient across the membrane. The catalytic sites are hosted primarily by the beta subunits. This is ATP synthase subunit beta from Coxiella burnetii (strain RSA 331 / Henzerling II).